Consider the following 602-residue polypeptide: Beta-(1--&gt;2)glucan export ATP-binding/permease protein NdvA (602 aa).

Positions G21–M311 constitute an ABC transmembrane type-1 domain. A run of 6 helical transmembrane segments spans residues W22 to F42, L68 to L88, E146 to W166, R167 to V187, V254 to L274, and Q276 to I296. The ABC transporter domain occupies V345–A579. G378 to S385 contributes to the ATP binding site.

It belongs to the ABC transporter superfamily. Beta-(1--&gt;2)glucan exporter (TC 3.A.1.108.1) family. As to quaternary structure, homodimer.

The protein localises to the cell inner membrane. The catalysed reaction is [(1-&gt;2)-beta-D-glucosyl](n)(in) + ATP + H2O = [(1-&gt;2)-beta-D-glucosyl](n)(out) + ADP + phosphate + H(+). Involved in beta-(1--&gt;2)glucan export. Transmembrane domains (TMD) form a pore in the inner membrane and the ATP-binding domain (NBD) is responsible for energy generation. The protein is Beta-(1--&gt;2)glucan export ATP-binding/permease protein NdvA of Rhodopseudomonas palustris (strain BisB5).